The primary structure comprises 316 residues: Leucine-rich repeat-containing protein 73 (316 aa).

LRR repeat units follow at residues 57 to 78 (SLAQ…KQLA), 86 to 106 (SIQS…ALLN), 114 to 137 (ALVA…CGLL), 145 to 166 (GLKE…SRLA), 174 to 187 (QVRV…PLGD), 202 to 223 (TLEV…TLLD), and 231 to 250 (ALRS…QQQI). The tract at residues 257–296 (GEEEEEVAGGAGDTQEWERGREPAAHQRGSSSWMCPSDPS) is disordered. A compositionally biased stretch (basic and acidic residues) spans 272–281 (EWERGREPAA). The span at 286–296 (SSSWMCPSDPS) shows a compositional bias: low complexity.

This is Leucine-rich repeat-containing protein 73 (LRRC73) from Homo sapiens (Human).